A 105-amino-acid chain; its full sequence is Phosphoribosyl-AMP cyclohydrolase (105 aa).

Aspartate 72 is a binding site for Mg(2+). Cysteine 73 contributes to the Zn(2+) binding site. Mg(2+)-binding residues include aspartate 74 and aspartate 76. The Zn(2+) site is built by cysteine 89 and cysteine 96.

It belongs to the PRA-CH family. As to quaternary structure, homodimer. Mg(2+) serves as cofactor. It depends on Zn(2+) as a cofactor.

The protein localises to the cytoplasm. It carries out the reaction 1-(5-phospho-beta-D-ribosyl)-5'-AMP + H2O = 1-(5-phospho-beta-D-ribosyl)-5-[(5-phospho-beta-D-ribosylamino)methylideneamino]imidazole-4-carboxamide. The protein operates within amino-acid biosynthesis; L-histidine biosynthesis; L-histidine from 5-phospho-alpha-D-ribose 1-diphosphate: step 3/9. Its function is as follows. Catalyzes the hydrolysis of the adenine ring of phosphoribosyl-AMP. The protein is Phosphoribosyl-AMP cyclohydrolase of Listeria monocytogenes serotype 4b (strain CLIP80459).